The sequence spans 337 residues: Putative [LysW]-lysine/[LysW]-ornithine hydrolase (337 aa).

Histidine 67 contacts Zn(2+). The active site involves aspartate 69. A Zn(2+)-binding site is contributed by aspartate 91. The active-site Proton acceptor is the glutamate 118. Zn(2+) contacts are provided by glutamate 119, glutamate 140, and histidine 298.

It belongs to the peptidase M20A family. LysK subfamily. Requires Zn(2+) as cofactor. Co(2+) serves as cofactor.

The protein localises to the cytoplasm. It catalyses the reaction [amino-group carrier protein]-C-terminal-gamma-(L-lysyl)-L-glutamate + H2O = [amino-group carrier protein]-C-terminal-L-glutamate + L-lysine. The enzyme catalyses [amino-group carrier protein]-C-terminal-gamma-(L-ornithyl)-L-glutamate + H2O = [amino-group carrier protein]-C-terminal-L-glutamate + L-ornithine. Its pathway is amino-acid biosynthesis; L-lysine biosynthesis via AAA pathway; L-lysine from L-alpha-aminoadipate (Thermus route): step 5/5. The protein operates within amino-acid biosynthesis; L-arginine biosynthesis. Its function is as follows. Catalyzes the release of L-lysine from [LysW]-gamma-L-lysine and the release of L-ornithine from [LysW]-L-ornithine. In Pyrococcus abyssi (strain GE5 / Orsay), this protein is Putative [LysW]-lysine/[LysW]-ornithine hydrolase.